Consider the following 441-residue polypeptide: ATP-dependent protease ATPase subunit HslU (441 aa).

ATP contacts are provided by residues Val-18, 60 to 65 (GVGKTE), Asp-253, Glu-319, and Arg-391.

The protein belongs to the ClpX chaperone family. HslU subfamily. In terms of assembly, a double ring-shaped homohexamer of HslV is capped on each side by a ring-shaped HslU homohexamer. The assembly of the HslU/HslV complex is dependent on binding of ATP.

It is found in the cytoplasm. ATPase subunit of a proteasome-like degradation complex; this subunit has chaperone activity. The binding of ATP and its subsequent hydrolysis by HslU are essential for unfolding of protein substrates subsequently hydrolyzed by HslV. HslU recognizes the N-terminal part of its protein substrates and unfolds these before they are guided to HslV for hydrolysis. This Nitratidesulfovibrio vulgaris (strain DP4) (Desulfovibrio vulgaris) protein is ATP-dependent protease ATPase subunit HslU.